Consider the following 346-residue polypeptide: N-acetyl-gamma-glutamyl-phosphate reductase (346 aa).

The active site involves Cys-149.

It belongs to the NAGSA dehydrogenase family. Type 1 subfamily.

It is found in the cytoplasm. The catalysed reaction is N-acetyl-L-glutamate 5-semialdehyde + phosphate + NADP(+) = N-acetyl-L-glutamyl 5-phosphate + NADPH + H(+). It participates in amino-acid biosynthesis; L-arginine biosynthesis; N(2)-acetyl-L-ornithine from L-glutamate: step 3/4. In terms of biological role, catalyzes the NADPH-dependent reduction of N-acetyl-5-glutamyl phosphate to yield N-acetyl-L-glutamate 5-semialdehyde. The sequence is that of N-acetyl-gamma-glutamyl-phosphate reductase from Desulfotalea psychrophila (strain LSv54 / DSM 12343).